The primary structure comprises 184 residues: UPF0398 protein BCAH820_1652 (184 aa).

The protein belongs to the UPF0398 family.

The polypeptide is UPF0398 protein BCAH820_1652 (Bacillus cereus (strain AH820)).